The primary structure comprises 287 residues: Polyamine aminopropyltransferase (287 aa).

In terms of domain architecture, PABS spans 5–238 (EIWYETLHAN…GIMTFAWASN (234 aa)). An S-methyl-5'-thioadenosine-binding site is contributed by Q33. The spermidine site is built by H64 and D88. S-methyl-5'-thioadenosine is bound by residues E108 and 140–141 (DG). D158 acts as the Proton acceptor in catalysis. Spermidine is bound at residue 158 to 161 (DCTD). P165 lines the S-methyl-5'-thioadenosine pocket.

It belongs to the spermidine/spermine synthase family. As to quaternary structure, homodimer or homotetramer.

The protein resides in the cytoplasm. The enzyme catalyses S-adenosyl 3-(methylsulfanyl)propylamine + putrescine = S-methyl-5'-thioadenosine + spermidine + H(+). It participates in amine and polyamine biosynthesis; spermidine biosynthesis; spermidine from putrescine: step 1/1. Catalyzes the irreversible transfer of a propylamine group from the amino donor S-adenosylmethioninamine (decarboxy-AdoMet) to putrescine (1,4-diaminobutane) to yield spermidine. The chain is Polyamine aminopropyltransferase from Pectobacterium atrosepticum (strain SCRI 1043 / ATCC BAA-672) (Erwinia carotovora subsp. atroseptica).